A 317-amino-acid polypeptide reads, in one-letter code: Probable cell division protein WhiA (317 aa).

A DNA-binding region (H-T-H motif) is located at residues 276–310 (TLKELGEMVSGGKISKSGINHRLRKIDDIAEKLRA).

This sequence belongs to the WhiA family.

In terms of biological role, involved in cell division and chromosome segregation. This chain is Probable cell division protein WhiA, found in Bacillus thuringiensis (strain Al Hakam).